The sequence spans 214 residues: Orotate phosphoribosyltransferase (214 aa).

Lysine 26 lines the 5-phospho-alpha-D-ribose 1-diphosphate pocket. Position 34-35 (34-35) interacts with orotate; that stretch reads FF. Residues 72-73, arginine 99, lysine 100, lysine 103, histidine 105, and 124-132 contribute to the 5-phospho-alpha-D-ribose 1-diphosphate site; these read YK and DDVITAGTA. 2 residues coordinate orotate: threonine 128 and arginine 156.

Belongs to the purine/pyrimidine phosphoribosyltransferase family. PyrE subfamily. In terms of assembly, homodimer. Mg(2+) serves as cofactor.

It catalyses the reaction orotidine 5'-phosphate + diphosphate = orotate + 5-phospho-alpha-D-ribose 1-diphosphate. It participates in pyrimidine metabolism; UMP biosynthesis via de novo pathway; UMP from orotate: step 1/2. In terms of biological role, catalyzes the transfer of a ribosyl phosphate group from 5-phosphoribose 1-diphosphate to orotate, leading to the formation of orotidine monophosphate (OMP). This chain is Orotate phosphoribosyltransferase, found in Proteus mirabilis (strain HI4320).